The sequence spans 45 residues: Large ribosomal subunit protein bL34 (45 aa).

This sequence belongs to the bacterial ribosomal protein bL34 family.

The chain is Large ribosomal subunit protein bL34 from Frankia casuarinae (strain DSM 45818 / CECT 9043 / HFP020203 / CcI3).